The primary structure comprises 287 residues: Undecaprenyl-diphosphatase (287 aa).

The next 6 helical transmembrane spans lie at 50–70, 99–119, 128–148, 206–226, 231–251, and 263–283; these read PGVS…IAYF, IAMA…KLFW, LRSV…LAVA, FLLG…DALA, AGPL…WLAI, and TWLF…WWSI.

It belongs to the UppP family.

It localises to the cell inner membrane. It catalyses the reaction di-trans,octa-cis-undecaprenyl diphosphate + H2O = di-trans,octa-cis-undecaprenyl phosphate + phosphate + H(+). In terms of biological role, catalyzes the dephosphorylation of undecaprenyl diphosphate (UPP). Confers resistance to bacitracin. This is Undecaprenyl-diphosphatase from Parasynechococcus marenigrum (strain WH8102).